Here is a 302-residue protein sequence, read N- to C-terminus: Dihydroorotate dehydrogenase B (NAD(+)), catalytic subunit (302 aa).

FMN is bound by residues serine 23 and 47-48; that span reads KG. Substrate contacts are provided by residues lysine 47 and 71–75; that span reads NSVGL. FMN is bound by residues asparagine 101 and asparagine 128. Asparagine 128 contributes to the substrate binding site. Catalysis depends on cysteine 131, which acts as the Nucleophile. FMN contacts are provided by lysine 166 and isoleucine 192. 193-194 lines the substrate pocket; sequence NT. FMN-binding positions include glycine 218, 244–245, and 266–267; these read GG and GT.

The protein belongs to the dihydroorotate dehydrogenase family. Type 1 subfamily. In terms of assembly, heterotetramer of 2 PyrK and 2 PyrD type B subunits. FMN serves as cofactor.

The protein localises to the cytoplasm. The enzyme catalyses (S)-dihydroorotate + NAD(+) = orotate + NADH + H(+). Its pathway is pyrimidine metabolism; UMP biosynthesis via de novo pathway; orotate from (S)-dihydroorotate (NAD(+) route): step 1/1. Catalyzes the conversion of dihydroorotate to orotate with NAD(+) as electron acceptor. The chain is Dihydroorotate dehydrogenase B (NAD(+)), catalytic subunit (pyrD) from Alkaliphilus oremlandii (strain OhILAs) (Clostridium oremlandii (strain OhILAs)).